The sequence spans 253 residues: Major prion protein (253 aa).

A signal peptide spans 1 to 22 (MANLGCWMLVLFVATWSNLGLC). Residues 23-38 (KKRPKPGGWNTGGSRY) are interaction with ADGRG6. An interaction with GRB2, ERI3 and SYN1 region spans residues 23 to 230 (KKRPKPGGWN…ESQAYYQRGS (208 aa)). Positions 25-108 (RPKPGGWNTG…WNKPSKPKTN (84 aa)) are disordered. 5 repeat units span residues 51 to 59 (PQGGGGWGQ), 60 to 67 (PHGGGWGQ), 68 to 75 (PHGGGWGQ), 76 to 83 (PHGGGWGQ), and 84 to 91 (PHGGGWGQ). The tract at residues 51–91 (PQGGGGWGQPHGGGWGQPHGGGWGQPHGGGWGQPHGGGWGQ) is 5 X 8 AA tandem repeats of P-H-G-G-G-W-G-Q. Gly residues predominate over residues 52–95 (QGGGGWGQPHGGGWGQPHGGGWGQPHGGGWGQPHGGGWGQGGGT). The Cu(2+) site is built by H61, G62, G63, H69, G70, G71, H77, G78, G79, H85, G86, and G87. The cysteines at positions 179 and 214 are disulfide-linked. N-linked (GlcNAc...) asparagine glycans are attached at residues N181 and N197. S230 is lipidated: GPI-anchor amidated serine. Residues 231–253 (SMVLFSSPPVILLISFLIFLIVG) constitute a propeptide, removed in mature form.

The protein belongs to the prion family. In terms of assembly, monomer and homodimer. Has a tendency to aggregate into amyloid fibrils containing a cross-beta spine, formed by a steric zipper of superposed beta-strands. Soluble oligomers may represent an intermediate stage on the path to fibril formation. Copper binding may promote oligomerization. Interacts with GRB2, APP, ERI3/PRNPIP and SYN1. Mislocalized cytosolically exposed PrP interacts with MGRN1; this interaction alters MGRN1 subcellular location and causes lysosomal enlargement. Interacts with APP. Interacts with KIAA1191. Interacts with ADGRG6.

It localises to the cell membrane. It is found in the golgi apparatus. Functionally, its primary physiological function is unclear. May play a role in neuronal development and synaptic plasticity. May be required for neuronal myelin sheath maintenance. May promote myelin homeostasis through acting as an agonist for ADGRG6 receptor. May play a role in iron uptake and iron homeostasis. Soluble oligomers are toxic to cultured neuroblastoma cells and induce apoptosis (in vitro). Association with GPC1 (via its heparan sulfate chains) targets PRNP to lipid rafts. Also provides Cu(2+) or Zn(2+) for the ascorbate-mediated GPC1 deaminase degradation of its heparan sulfate side chains. The chain is Major prion protein (PRNP) from Pongo pygmaeus (Bornean orangutan).